A 353-amino-acid polypeptide reads, in one-letter code: Phosphate acyltransferase (353 aa).

Belongs to the PlsX family. Homodimer. Probably interacts with PlsY.

The protein resides in the cytoplasm. It carries out the reaction a fatty acyl-[ACP] + phosphate = an acyl phosphate + holo-[ACP]. Its pathway is lipid metabolism; phospholipid metabolism. Its function is as follows. Catalyzes the reversible formation of acyl-phosphate (acyl-PO(4)) from acyl-[acyl-carrier-protein] (acyl-ACP). This enzyme utilizes acyl-ACP as fatty acyl donor, but not acyl-CoA. In Syntrophobacter fumaroxidans (strain DSM 10017 / MPOB), this protein is Phosphate acyltransferase.